The chain runs to 364 residues: Dual-specificity RNA methyltransferase RlmN (364 aa).

Glutamate 91 (proton acceptor) is an active-site residue. Residues 97 to 333 (ESDRGTLCIS…VTVRKTRGDD (237 aa)) enclose the Radical SAM core domain. A disulfide bridge connects residues cysteine 104 and cysteine 338. [4Fe-4S] cluster-binding residues include cysteine 111, cysteine 115, and cysteine 118. S-adenosyl-L-methionine contacts are provided by residues 164–165 (GE), serine 196, 218–220 (SLH), and asparagine 295. The S-methylcysteine intermediate role is filled by cysteine 338.

Belongs to the radical SAM superfamily. RlmN family. [4Fe-4S] cluster is required as a cofactor.

It localises to the cytoplasm. The enzyme catalyses adenosine(2503) in 23S rRNA + 2 reduced [2Fe-2S]-[ferredoxin] + 2 S-adenosyl-L-methionine = 2-methyladenosine(2503) in 23S rRNA + 5'-deoxyadenosine + L-methionine + 2 oxidized [2Fe-2S]-[ferredoxin] + S-adenosyl-L-homocysteine. The catalysed reaction is adenosine(37) in tRNA + 2 reduced [2Fe-2S]-[ferredoxin] + 2 S-adenosyl-L-methionine = 2-methyladenosine(37) in tRNA + 5'-deoxyadenosine + L-methionine + 2 oxidized [2Fe-2S]-[ferredoxin] + S-adenosyl-L-homocysteine. Functionally, specifically methylates position 2 of adenine 2503 in 23S rRNA and position 2 of adenine 37 in tRNAs. m2A2503 modification seems to play a crucial role in the proofreading step occurring at the peptidyl transferase center and thus would serve to optimize ribosomal fidelity. The protein is Dual-specificity RNA methyltransferase RlmN of Neisseria meningitidis serogroup B (strain ATCC BAA-335 / MC58).